Reading from the N-terminus, the 62-residue chain is Photosystem II reaction center protein Z (62 aa).

2 helical membrane-spanning segments follow: residues 8 to 28 and 41 to 61; these read ALFALVAISFILVVGVPVILA and FSGASLWIFLVFVVGILNSFI.

It belongs to the PsbZ family. PSII is composed of 1 copy each of membrane proteins PsbA, PsbB, PsbC, PsbD, PsbE, PsbF, PsbH, PsbI, PsbJ, PsbK, PsbL, PsbM, PsbT, PsbY, PsbZ, Psb30/Ycf12, at least 3 peripheral proteins of the oxygen-evolving complex and a large number of cofactors. It forms dimeric complexes.

The protein localises to the plastid. Its subcellular location is the chloroplast thylakoid membrane. May control the interaction of photosystem II (PSII) cores with the light-harvesting antenna, regulates electron flow through the 2 photosystem reaction centers. PSII is a light-driven water plastoquinone oxidoreductase, using light energy to abstract electrons from H(2)O, generating a proton gradient subsequently used for ATP formation. This chain is Photosystem II reaction center protein Z, found in Chara vulgaris (Common stonewort).